A 156-amino-acid chain; its full sequence is ATP synthase subunit b (156 aa).

Residues 11–31 (AIAFILFVWFCMKYVWPPLMA) form a helical membrane-spanning segment.

The protein belongs to the ATPase B chain family. As to quaternary structure, F-type ATPases have 2 components, F(1) - the catalytic core - and F(0) - the membrane proton channel. F(1) has five subunits: alpha(3), beta(3), gamma(1), delta(1), epsilon(1). F(0) has three main subunits: a(1), b(2) and c(10-14). The alpha and beta chains form an alternating ring which encloses part of the gamma chain. F(1) is attached to F(0) by a central stalk formed by the gamma and epsilon chains, while a peripheral stalk is formed by the delta and b chains.

The protein resides in the cell inner membrane. Its function is as follows. F(1)F(0) ATP synthase produces ATP from ADP in the presence of a proton or sodium gradient. F-type ATPases consist of two structural domains, F(1) containing the extramembraneous catalytic core and F(0) containing the membrane proton channel, linked together by a central stalk and a peripheral stalk. During catalysis, ATP synthesis in the catalytic domain of F(1) is coupled via a rotary mechanism of the central stalk subunits to proton translocation. Functionally, component of the F(0) channel, it forms part of the peripheral stalk, linking F(1) to F(0). The polypeptide is ATP synthase subunit b (Enterobacter sp. (strain 638)).